We begin with the raw amino-acid sequence, 391 residues long: Processive diacylglycerol beta-glucosyltransferase (391 aa).

This sequence belongs to the glycosyltransferase 28 family. UgtP subfamily.

It localises to the cell membrane. It carries out the reaction a 1,2-diacyl-3-O-(beta-D-glucopyranosyl)-sn-glycerol + UDP-alpha-D-glucose = a 1,2-diacyl-3-O-(beta-D-Glc-(1-&gt;6)-beta-D-Glc)-sn-glycerol + UDP + H(+). The catalysed reaction is a 1,2-diacyl-sn-glycerol + UDP-alpha-D-glucose = a 1,2-diacyl-3-O-(beta-D-glucopyranosyl)-sn-glycerol + UDP + H(+). Its pathway is glycolipid metabolism; diglucosyl-diacylglycerol biosynthesis. Functionally, processive glucosyltransferase involved in the biosynthesis of both the bilayer- and non-bilayer-forming membrane glucolipids. Is able to successively transfer two glucosyl residues to diacylglycerol (DAG), thereby catalyzing the formation of beta-monoglucosyl-DAG (3-O-(beta-D-glucopyranosyl)-1,2-diacyl-sn-glycerol) and beta-diglucosyl-DAG (3-O-(beta-D-glucopyranosyl-beta-(1-&gt;6)-D-glucopyranosyl)-1,2-diacyl-sn-glycerol). Beta-diglucosyl-DAG is the predominant glycolipid found in Bacillales and is also used as a membrane anchor for lipoteichoic acid (LTA). The sequence is that of Processive diacylglycerol beta-glucosyltransferase from Staphylococcus carnosus (strain TM300).